A 480-amino-acid chain; its full sequence is ATP synthase subunit beta 1 (480 aa).

ATP is bound at residue 154–161; sequence GGAGVGKT.

Belongs to the ATPase alpha/beta chains family. F-type ATPases have 2 components, CF(1) - the catalytic core - and CF(0) - the membrane proton channel. CF(1) has five subunits: alpha(3), beta(3), gamma(1), delta(1), epsilon(1). CF(0) has four main subunits: a(1), b(1), b'(1) and c(9-12).

Its subcellular location is the cell inner membrane. It carries out the reaction ATP + H2O + 4 H(+)(in) = ADP + phosphate + 5 H(+)(out). Produces ATP from ADP in the presence of a proton gradient across the membrane. The catalytic sites are hosted primarily by the beta subunits. In Chlorobaculum tepidum (strain ATCC 49652 / DSM 12025 / NBRC 103806 / TLS) (Chlorobium tepidum), this protein is ATP synthase subunit beta 1.